The primary structure comprises 198 residues: Glycerol-3-phosphate acyltransferase 2 (198 aa).

The next 4 membrane-spanning stretches (helical) occupy residues 4-24 (TYLL…LVVG), 71-91 (LPMV…AVLG), 113-133 (LLCY…TLLF), and 147-167 (VVAV…AMCL).

The protein belongs to the PlsY family. In terms of assembly, probably interacts with PlsX.

It localises to the cell membrane. It catalyses the reaction an acyl phosphate + sn-glycerol 3-phosphate = a 1-acyl-sn-glycero-3-phosphate + phosphate. The protein operates within lipid metabolism; phospholipid metabolism. Catalyzes the transfer of an acyl group from acyl-phosphate (acyl-PO(4)) to glycerol-3-phosphate (G3P) to form lysophosphatidic acid (LPA). This enzyme utilizes acyl-phosphate as fatty acyl donor, but not acyl-CoA or acyl-ACP. The protein is Glycerol-3-phosphate acyltransferase 2 of Bacillus cereus (strain ZK / E33L).